The sequence spans 947 residues: Bifunctional glutamine synthetase adenylyltransferase/adenylyl-removing enzyme (947 aa).

The interval 1 to 443 is adenylyl removase; it reads MQLPSSLVSV…VFETLIGDDE (443 aa). Residues 451–947 are adenylyl transferase; it reads ARHFHELWDM…VKQAWNQWFA (497 aa).

The protein belongs to the GlnE family. Mg(2+) is required as a cofactor.

It catalyses the reaction [glutamine synthetase]-O(4)-(5'-adenylyl)-L-tyrosine + phosphate = [glutamine synthetase]-L-tyrosine + ADP. It carries out the reaction [glutamine synthetase]-L-tyrosine + ATP = [glutamine synthetase]-O(4)-(5'-adenylyl)-L-tyrosine + diphosphate. Functionally, involved in the regulation of glutamine synthetase GlnA, a key enzyme in the process to assimilate ammonia. When cellular nitrogen levels are high, the C-terminal adenylyl transferase (AT) inactivates GlnA by covalent transfer of an adenylyl group from ATP to specific tyrosine residue of GlnA, thus reducing its activity. Conversely, when nitrogen levels are low, the N-terminal adenylyl removase (AR) activates GlnA by removing the adenylyl group by phosphorolysis, increasing its activity. The regulatory region of GlnE binds the signal transduction protein PII (GlnB) which indicates the nitrogen status of the cell. The chain is Bifunctional glutamine synthetase adenylyltransferase/adenylyl-removing enzyme from Vibrio parahaemolyticus serotype O3:K6 (strain RIMD 2210633).